The following is a 551-amino-acid chain: HTH-type transcriptional regulator SgrR (551 aa).

An HTH marR-type domain is found at 1-116 (MPSARLQQQF…LVSHLGRSFR (116 aa)). Residues 26–49 (LNELAALLSCSRRHMRTLLNTMQD) constitute a DNA-binding region (H-T-H motif). A solute-binding region spans residues 163 to 492 (ELEADIAHHW…IDWQADAARW (330 aa)).

Its function is as follows. Activates the small RNA gene sgrS under glucose-phosphate stress conditions as well as yfdZ. Represses its own transcription under both stress and non-stress conditions. Might act as a sensor of the intracellular accumulation of phosphoglucose by binding these molecules in its C-terminal solute-binding domain. In Escherichia coli O1:K1 / APEC, this protein is HTH-type transcriptional regulator SgrR.